Reading from the N-terminus, the 455-residue chain is D-inositol 3-phosphate glycosyltransferase (455 aa).

Residues 1–25 (MSQHVSRLGGLRGRSHGHGAFGGPY) are disordered. Histidine 45 provides a ligand contact to 1D-myo-inositol 3-phosphate. Residues 51 to 52 (QP) and glycine 59 contribute to the UDP-N-acetyl-alpha-D-glucosamine site. Residues 56–61 (DAGGMN), lysine 114, tyrosine 147, threonine 171, and arginine 191 contribute to the 1D-myo-inositol 3-phosphate site. UDP-N-acetyl-alpha-D-glucosamine-binding residues include arginine 266 and lysine 271. Residues tyrosine 341, arginine 342, and alanine 344 each contribute to the Mg(2+) site. The UDP-N-acetyl-alpha-D-glucosamine site is built by glutamate 354 and glutamate 362. A Mg(2+)-binding site is contributed by threonine 368.

It belongs to the glycosyltransferase group 1 family. MshA subfamily. In terms of assembly, homodimer.

The enzyme catalyses 1D-myo-inositol 3-phosphate + UDP-N-acetyl-alpha-D-glucosamine = 1D-myo-inositol 2-acetamido-2-deoxy-alpha-D-glucopyranoside 3-phosphate + UDP + H(+). Functionally, catalyzes the transfer of a N-acetyl-glucosamine moiety to 1D-myo-inositol 3-phosphate to produce 1D-myo-inositol 2-acetamido-2-deoxy-glucopyranoside 3-phosphate in the mycothiol biosynthesis pathway. The sequence is that of D-inositol 3-phosphate glycosyltransferase from Streptomyces bingchenggensis (strain BCW-1).